The sequence spans 205 residues: Imidazole glycerol phosphate synthase subunit HisH (205 aa).

The 205-residue stretch at M1–G205 folds into the Glutamine amidotransferase type-1 domain. Catalysis depends on C79, which acts as the Nucleophile. Residues H186 and E188 contribute to the active site.

In terms of assembly, heterodimer of HisH and HisF.

It localises to the cytoplasm. The catalysed reaction is 5-[(5-phospho-1-deoxy-D-ribulos-1-ylimino)methylamino]-1-(5-phospho-beta-D-ribosyl)imidazole-4-carboxamide + L-glutamine = D-erythro-1-(imidazol-4-yl)glycerol 3-phosphate + 5-amino-1-(5-phospho-beta-D-ribosyl)imidazole-4-carboxamide + L-glutamate + H(+). The enzyme catalyses L-glutamine + H2O = L-glutamate + NH4(+). It participates in amino-acid biosynthesis; L-histidine biosynthesis; L-histidine from 5-phospho-alpha-D-ribose 1-diphosphate: step 5/9. IGPS catalyzes the conversion of PRFAR and glutamine to IGP, AICAR and glutamate. The HisH subunit catalyzes the hydrolysis of glutamine to glutamate and ammonia as part of the synthesis of IGP and AICAR. The resulting ammonia molecule is channeled to the active site of HisF. This Wolinella succinogenes (strain ATCC 29543 / DSM 1740 / CCUG 13145 / JCM 31913 / LMG 7466 / NCTC 11488 / FDC 602W) (Vibrio succinogenes) protein is Imidazole glycerol phosphate synthase subunit HisH.